A 279-amino-acid polypeptide reads, in one-letter code: Dehydrogenase/reductase SDR family member 4 (279 aa).

Residue 37 to 61 coordinates NADP(+); it reads LVTASTDGIGLAIARRLAQDGAHVV. Lys93 bears the N6-acetyllysine; alternate mark. Lys93 bears the N6-succinyllysine; alternate mark. Ser170 is a binding site for substrate. The active-site Proton acceptor is the Tyr183. Lys187 contacts NADP(+). At Lys217 the chain carries N6-acetyllysine; alternate. Lys217 carries the N6-succinyllysine; alternate modification. Phosphoserine is present on Ser221. 2 positions are modified to N6-succinyllysine: Lys228 and Lys235. The short motif at 277–279 is the Peroxisomal targeting signal element; that stretch reads SRL.

This sequence belongs to the short-chain dehydrogenases/reductases (SDR) family. As to quaternary structure, homotetramer. Detected in heart, kidney, liver and small intestine. Detected at lower levels in brain, lung, stomach and spleen.

The protein resides in the peroxisome. The enzyme catalyses a secondary alcohol + NADP(+) = a ketone + NADPH + H(+). It catalyses the reaction 3alpha-hydroxy-5beta-pregnan-20-one + NADP(+) = 5beta-pregnan-3,20-dione + NADPH + H(+). The catalysed reaction is 5beta-dihydrotestosterone + NADPH + H(+) = 5beta-androstane-3alpha,17beta-diol + NADP(+). It carries out the reaction all-trans-retinol + NADP(+) = all-trans-retinal + NADPH + H(+). The enzyme catalyses isatin + NADPH + H(+) = 3-hydroxyindolin-2-one + NADP(+). With respect to regulation, inhibited by kaempferol, quercetin, genistein and myristic acid. NADPH-dependent oxidoreductase which catalyzes the reduction of a variety of compounds bearing carbonyl groups including ketosteroids, alpha-dicarbonyl compounds, aldehydes, aromatic ketones and quinones. Reduces all-trans-retinal and 9-cis retinal. Reduces 3-ketosteroids and benzil into 3alpha-hydroxysteroids and S-benzoin, respectively, in contrast to the stereoselectivity of primates DHRS4s which produce 3beta-hydroxysteroids and R-benzoin. In the reverse reaction, catalyzes the NADP-dependent oxidation of 3alpha-hydroxysteroids and alcohol, but with much lower efficiency. Involved in the metabolism of 3alpha-hydroxysteroids, retinoid, isatin and xenobiotic carbonyl compounds. This Sus scrofa (Pig) protein is Dehydrogenase/reductase SDR family member 4 (DHRS4).